Consider the following 183-residue polypeptide: Apo-citrate lyase phosphoribosyl-dephospho-CoA transferase (183 aa).

The protein belongs to the CitX family.

It carries out the reaction apo-[citrate lyase ACP] + 2'-(5''-triphospho-alpha-D-ribosyl)-3'-dephospho-CoA = holo-[citrate lyase ACP] + diphosphate. In terms of biological role, transfers 2-(5''-triphosphoribosyl)-3'-dephosphocoenzyme-A on a serine residue to the apo-acyl carrier protein (gamma chain) of the citrate lyase to yield holo-acyl carrier protein. This Escherichia coli O139:H28 (strain E24377A / ETEC) protein is Apo-citrate lyase phosphoribosyl-dephospho-CoA transferase.